A 338-amino-acid polypeptide reads, in one-letter code: Glycerol-3-phosphate dehydrogenase [NAD(P)+] (338 aa).

The NADPH site is built by Ser14, Tyr15, His35, and Lys109. 3 residues coordinate sn-glycerol 3-phosphate: Lys109, Gly138, and Thr140. Ala142 provides a ligand contact to NADPH. Lys194, Asp247, Ser257, Arg258, and Asn259 together coordinate sn-glycerol 3-phosphate. Lys194 acts as the Proton acceptor in catalysis. An NADPH-binding site is contributed by Arg258. NADPH contacts are provided by Val282 and Glu284.

Belongs to the NAD-dependent glycerol-3-phosphate dehydrogenase family.

It is found in the cytoplasm. The catalysed reaction is sn-glycerol 3-phosphate + NAD(+) = dihydroxyacetone phosphate + NADH + H(+). It catalyses the reaction sn-glycerol 3-phosphate + NADP(+) = dihydroxyacetone phosphate + NADPH + H(+). It participates in membrane lipid metabolism; glycerophospholipid metabolism. Functionally, catalyzes the reduction of the glycolytic intermediate dihydroxyacetone phosphate (DHAP) to sn-glycerol 3-phosphate (G3P), the key precursor for phospholipid synthesis. This is Glycerol-3-phosphate dehydrogenase [NAD(P)+] from Shewanella sediminis (strain HAW-EB3).